The primary structure comprises 150 residues: S-protein homolog 24 (150 aa).

N-linked (GlcNAc...) asparagine glycosylation occurs at Asn122.

The protein belongs to the plant self-incompatibility (S1) protein family.

It localises to the secreted. This Arabidopsis thaliana (Mouse-ear cress) protein is S-protein homolog 24.